We begin with the raw amino-acid sequence, 675 residues long: Nexilin (675 aa).

The interval 1 to 66 (MNDISQKAEI…RKEQYIRERE (66 aa)) is disordered. A Phosphoserine modification is found at Lys-16. Residues 27–66 (GKGDVKDKFEAMQRAREERNQRRSRDEKQRRKEQYIRERE) show a composition bias toward basic and acidic residues. Position 80 is a phosphoserine (Ser-80). The tract at residues 105 to 127 (RFAEMEKQRQEEQRKRTEEERKR) is disordered. Ser-241 carries the phosphoserine modification. Disordered regions lie at residues 254-278 (LERQ…EEEK) and 313-336 (SFEE…ARRR). Residues Ser-357 and Ser-365 each carry the phosphoserine modification. Residue Thr-370 is modified to Phosphothreonine. 2 disordered regions span residues 487-513 (ENFH…KVNM) and 551-584 (LQKK…APWF). 2 positions are modified to phosphoserine: Ser-564 and Ser-569. Residues 582–670 (PWFKKPLKNT…GSAASTCILT (89 aa)) form the Ig-like domain.

Interacts with F-actin. As to expression, abundantly expressed in heart and skeletal muscle, and at lower levels in placenta, lung, liver and pancreas. Also expressed in HeLaS3 and MOLT-4 cell lines.

Its subcellular location is the cytoplasm. The protein resides in the cytoskeleton. It is found in the cell junction. It localises to the adherens junction. The protein localises to the myofibril. Its subcellular location is the sarcomere. The protein resides in the z line. In terms of biological role, involved in regulating cell migration through association with the actin cytoskeleton. Has an essential role in the maintenance of Z line and sarcomere integrity. The polypeptide is Nexilin (Homo sapiens (Human)).